A 387-amino-acid chain; its full sequence is Ferrochelatase (387 aa).

Fe cation-binding residues include histidine 196 and glutamate 277.

The protein belongs to the ferrochelatase family.

The protein localises to the cytoplasm. The enzyme catalyses heme b + 2 H(+) = protoporphyrin IX + Fe(2+). It functions in the pathway porphyrin-containing compound metabolism; protoheme biosynthesis; protoheme from protoporphyrin-IX: step 1/1. Its function is as follows. Catalyzes the ferrous insertion into protoporphyrin IX. This chain is Ferrochelatase, found in Cyanothece sp. (strain PCC 7425 / ATCC 29141).